Consider the following 736-residue polypeptide: Phosphoribosylformylglycinamidine synthase subunit PurL (736 aa).

The active site involves H49. The ATP site is built by Y52 and K91. Position 93 (E93) interacts with Mg(2+). Substrate is bound by residues S94–H97 and R116. Catalysis depends on H95, which acts as the Proton acceptor. D117 provides a ligand contact to Mg(2+). Q240 provides a ligand contact to substrate. D268 is a Mg(2+) binding site. E312–Q314 provides a ligand contact to substrate. Residues D493 and G530 each contribute to the ATP site. N531 serves as a coordination point for Mg(2+). S533 is a binding site for substrate.

This sequence belongs to the FGAMS family. As to quaternary structure, monomer. Part of the FGAM synthase complex composed of 1 PurL, 1 PurQ and 2 PurS subunits.

It localises to the cytoplasm. The catalysed reaction is N(2)-formyl-N(1)-(5-phospho-beta-D-ribosyl)glycinamide + L-glutamine + ATP + H2O = 2-formamido-N(1)-(5-O-phospho-beta-D-ribosyl)acetamidine + L-glutamate + ADP + phosphate + H(+). The protein operates within purine metabolism; IMP biosynthesis via de novo pathway; 5-amino-1-(5-phospho-D-ribosyl)imidazole from N(2)-formyl-N(1)-(5-phospho-D-ribosyl)glycinamide: step 1/2. In terms of biological role, part of the phosphoribosylformylglycinamidine synthase complex involved in the purines biosynthetic pathway. Catalyzes the ATP-dependent conversion of formylglycinamide ribonucleotide (FGAR) and glutamine to yield formylglycinamidine ribonucleotide (FGAM) and glutamate. The FGAM synthase complex is composed of three subunits. PurQ produces an ammonia molecule by converting glutamine to glutamate. PurL transfers the ammonia molecule to FGAR to form FGAM in an ATP-dependent manner. PurS interacts with PurQ and PurL and is thought to assist in the transfer of the ammonia molecule from PurQ to PurL. This chain is Phosphoribosylformylglycinamidine synthase subunit PurL, found in Rhodopseudomonas palustris (strain ATCC BAA-98 / CGA009).